Here is a 145-residue protein sequence, read N- to C-terminus: D-aminoacyl-tRNA deacylase (145 aa).

The short motif at 137–138 is the Gly-cisPro motif, important for rejection of L-amino acids element; the sequence is GP.

The protein belongs to the DTD family. As to quaternary structure, homodimer.

The protein localises to the cytoplasm. The enzyme catalyses glycyl-tRNA(Ala) + H2O = tRNA(Ala) + glycine + H(+). It catalyses the reaction a D-aminoacyl-tRNA + H2O = a tRNA + a D-alpha-amino acid + H(+). An aminoacyl-tRNA editing enzyme that deacylates mischarged D-aminoacyl-tRNAs. Also deacylates mischarged glycyl-tRNA(Ala), protecting cells against glycine mischarging by AlaRS. Acts via tRNA-based rather than protein-based catalysis; rejects L-amino acids rather than detecting D-amino acids in the active site. By recycling D-aminoacyl-tRNA to D-amino acids and free tRNA molecules, this enzyme counteracts the toxicity associated with the formation of D-aminoacyl-tRNA entities in vivo and helps enforce protein L-homochirality. The protein is D-aminoacyl-tRNA deacylase of Rhodococcus jostii (strain RHA1).